A 138-amino-acid polypeptide reads, in one-letter code: Putative pre-16S rRNA nuclease (138 aa).

This sequence belongs to the YqgF nuclease family.

The protein resides in the cytoplasm. Could be a nuclease involved in processing of the 5'-end of pre-16S rRNA. In Listeria innocua serovar 6a (strain ATCC BAA-680 / CLIP 11262), this protein is Putative pre-16S rRNA nuclease.